A 460-amino-acid polypeptide reads, in one-letter code: Argininosuccinate lyase (460 aa).

The protein belongs to the lyase 1 family. Argininosuccinate lyase subfamily.

It is found in the cytoplasm. It catalyses the reaction 2-(N(omega)-L-arginino)succinate = fumarate + L-arginine. Its pathway is amino-acid biosynthesis; L-arginine biosynthesis; L-arginine from L-ornithine and carbamoyl phosphate: step 3/3. The chain is Argininosuccinate lyase from Mannheimia succiniciproducens (strain KCTC 0769BP / MBEL55E).